We begin with the raw amino-acid sequence, 220 residues long: Large ribosomal subunit protein uL1 (220 aa).

This sequence belongs to the universal ribosomal protein uL1 family. In terms of assembly, part of the 50S ribosomal subunit.

Its function is as follows. Binds directly to 23S rRNA. The L1 stalk is quite mobile in the ribosome, and is involved in E site tRNA release. In terms of biological role, protein L1 is also a translational repressor protein, it controls the translation of the L11 operon by binding to its mRNA. The polypeptide is Large ribosomal subunit protein uL1 (Ehrlichia chaffeensis (strain ATCC CRL-10679 / Arkansas)).